The sequence spans 184 residues: dCTP deaminase (184 aa).

107 to 112 (KSTYAR) provides a ligand contact to dCTP. Catalysis depends on glutamate 133, which acts as the Proton donor/acceptor. DCTP-binding residues include glutamine 152, tyrosine 166, and glutamine 176.

This sequence belongs to the dCTP deaminase family. Homotrimer.

It carries out the reaction dCTP + H2O + H(+) = dUTP + NH4(+). It functions in the pathway pyrimidine metabolism; dUMP biosynthesis; dUMP from dCTP (dUTP route): step 1/2. Its function is as follows. Catalyzes the deamination of dCTP to dUTP. The chain is dCTP deaminase from Herpetosiphon aurantiacus (strain ATCC 23779 / DSM 785 / 114-95).